The primary structure comprises 171 residues: UPF0098 protein aq_1250 (171 aa).

This sequence belongs to the UPF0098 family.

The polypeptide is UPF0098 protein aq_1250 (Aquifex aeolicus (strain VF5)).